Reading from the N-terminus, the 345-residue chain is GTP 3',8-cyclase (345 aa).

The region spanning 10 to 236 (SHGRPLGVLR…QCVSSHWPLD (227 aa)) is the Radical SAM core domain. GTP is bound at residue Arg19. The [4Fe-4S] cluster site is built by Cys26 and Cys30. Tyr32 lines the S-adenosyl-L-methionine pocket. Cys33 is a [4Fe-4S] cluster binding site. A GTP-binding site is contributed by Arg65. Position 69 (Gly69) interacts with S-adenosyl-L-methionine. GTP is bound at residue Thr98. Ser123 serves as a coordination point for S-adenosyl-L-methionine. Residue Lys172 participates in GTP binding. Met206 provides a ligand contact to S-adenosyl-L-methionine. Residues Cys269 and Cys272 each coordinate [4Fe-4S] cluster. 274–276 (RIR) contributes to the GTP binding site. Cys286 contributes to the [4Fe-4S] cluster binding site.

Belongs to the radical SAM superfamily. MoaA family. Monomer and homodimer. It depends on [4Fe-4S] cluster as a cofactor.

It carries out the reaction GTP + AH2 + S-adenosyl-L-methionine = (8S)-3',8-cyclo-7,8-dihydroguanosine 5'-triphosphate + 5'-deoxyadenosine + L-methionine + A + H(+). Its pathway is cofactor biosynthesis; molybdopterin biosynthesis. Functionally, catalyzes the cyclization of GTP to (8S)-3',8-cyclo-7,8-dihydroguanosine 5'-triphosphate. The polypeptide is GTP 3',8-cyclase (Synechococcus sp. (strain CC9902)).